A 360-amino-acid chain; its full sequence is Vomilenine reductase (360 aa).

An Enoyl reductase (ER) domain is found at 23 to 351; sequence GLLSPFNFSR…KADVKYRFVI (329 aa). C50 serves as a coordination point for Zn(2+). An an alcohol-binding site is contributed by S52. Residue S52 participates in NADP(+) binding. Zn(2+)-binding residues include D53, H72, E73, C103, C106, C109, C117, and C166. Position 72 (H72) interacts with an alcohol. NADP(+) contacts are provided by L192, G194, L195, S214, T215, S216, K219, K220, V277, A279, S301, and R348.

Belongs to the zinc-containing alcohol dehydrogenase family. Class-P subfamily. Homodimer. Zn(2+) is required as a cofactor. In terms of tissue distribution, confined to roots.

The protein resides in the cytoplasm. It catalyses the reaction (2R)-1,2-dihydrovomilenine + NADP(+) = vomilenine + NADPH + H(+). It participates in alkaloid biosynthesis; ajmaline biosynthesis. Its activity is regulated as follows. Inhibited by EDTA and p-hydroxymercuribenzoate, a sulfhydryl reagent. Alcohol dehydrogenase involved in the biosynthesis of ajmaline-type monoterpenoid indole alkaloids (MIAs) natural products, important plant-derived pharmaceuticals used in the therapy of heart disorders. Catalyzes the conversion of vomilenine to 1,2-dihydrovomilenine, an intermediate chemical in the biosynthesis of ajmaline. The chain is Vomilenine reductase from Rauvolfia serpentina (Serpentine wood).